A 115-amino-acid polypeptide reads, in one-letter code: Large ribosomal subunit protein bL19 (115 aa).

The protein belongs to the bacterial ribosomal protein bL19 family.

This protein is located at the 30S-50S ribosomal subunit interface and may play a role in the structure and function of the aminoacyl-tRNA binding site. The protein is Large ribosomal subunit protein bL19 of Buchnera aphidicola subsp. Schizaphis graminum (strain Sg).